The sequence spans 290 residues: 4-hydroxy-tetrahydrodipicolinate synthase (290 aa).

Thr-44 contributes to the pyruvate binding site. Tyr-132 acts as the Proton donor/acceptor in catalysis. The active-site Schiff-base intermediate with substrate is Lys-160. Ile-202 contacts pyruvate.

The protein belongs to the DapA family. In terms of assembly, homotetramer; dimer of dimers.

It localises to the cytoplasm. The catalysed reaction is L-aspartate 4-semialdehyde + pyruvate = (2S,4S)-4-hydroxy-2,3,4,5-tetrahydrodipicolinate + H2O + H(+). It participates in amino-acid biosynthesis; L-lysine biosynthesis via DAP pathway; (S)-tetrahydrodipicolinate from L-aspartate: step 3/4. Catalyzes the condensation of (S)-aspartate-beta-semialdehyde [(S)-ASA] and pyruvate to 4-hydroxy-tetrahydrodipicolinate (HTPA). The polypeptide is 4-hydroxy-tetrahydrodipicolinate synthase (Citrifermentans bemidjiense (strain ATCC BAA-1014 / DSM 16622 / JCM 12645 / Bem) (Geobacter bemidjiensis)).